Consider the following 326-residue polypeptide: UDP-3-O-acylglucosamine N-acyltransferase (326 aa).

The active-site Proton acceptor is the His235.

This sequence belongs to the transferase hexapeptide repeat family. LpxD subfamily. Homotrimer.

It catalyses the reaction a UDP-3-O-[(3R)-3-hydroxyacyl]-alpha-D-glucosamine + a (3R)-hydroxyacyl-[ACP] = a UDP-2-N,3-O-bis[(3R)-3-hydroxyacyl]-alpha-D-glucosamine + holo-[ACP] + H(+). The protein operates within bacterial outer membrane biogenesis; LPS lipid A biosynthesis. Functionally, catalyzes the N-acylation of UDP-3-O-acylglucosamine using 3-hydroxyacyl-ACP as the acyl donor. Is involved in the biosynthesis of lipid A, a phosphorylated glycolipid that anchors the lipopolysaccharide to the outer membrane of the cell. The polypeptide is UDP-3-O-acylglucosamine N-acyltransferase (Helicobacter hepaticus (strain ATCC 51449 / 3B1)).